The chain runs to 317 residues: MKLSFILSTLVAGALAYNEFSAPGPNAVLQEGGGVNTVSWSNLTSSTVTLTLYRGGNSALTPIETIASDIDNTGTYLWNIATYYEAADDYLLGLSFDGGETYSQYFTLQACSTCTISTSSLSYSGTISSTSIAPSMIGTRTSSSYFITSSSSTPSSSSSSSSSSPSSSSSKSSSSSKSSSSSSSSSKSSSSSSSSSKSSSSSSSSSKSSASPSSSKSSSKFSSSSFITSTTPASSSSSGAIVSNAKTASTDDSSSASSATSSVSSVVSSASSALSASASSASASVSSSASSDASPALKTGINALVAVGVVSAIALFL.

Positions 1–16 (MKLSFILSTLVAGALA) are cleaved as a signal peptide. A glycan (N-linked (GlcNAc...) asparagine) is linked at asparagine 42. 2 stretches are compositionally biased toward low complexity: residues 150–238 (SSST…SSSS) and 247–259 (TAST…ASSA). Positions 150-259 (SSSTPSSSSS…TDDSSSASSA (110 aa)) are disordered.

This is an uncharacterized protein from Schizosaccharomyces pombe (strain 972 / ATCC 24843) (Fission yeast).